Here is a 102-residue protein sequence, read N- to C-terminus: MPNIKSAIKRVDVAERNRQRNIAYKSMIKTFTKKFMTRLGEYAQSPSEAVLTEVQALLNQTFSRIDKAIKAGVIHTNTGARKKSRLDAALRTALAKAQAKAG.

The protein belongs to the bacterial ribosomal protein bS20 family.

Its function is as follows. Binds directly to 16S ribosomal RNA. The protein is Small ribosomal subunit protein bS20 of Gloeobacter violaceus (strain ATCC 29082 / PCC 7421).